The primary structure comprises 129 residues: Lysozyme C, milk isozyme (129 aa).

A C-type lysozyme domain is found at 1–129 (KIFSKCELAR…LSKYLASCNL (129 aa)). 4 cysteine pairs are disulfide-bonded: Cys-6-Cys-127, Cys-30-Cys-115, Cys-65-Cys-80, and Cys-76-Cys-94. Residues Glu-35 and Asp-53 contribute to the active site. Ca(2+) is bound by residues Lys-82, Asp-85, Asn-87, Asp-90, and Asp-91.

This sequence belongs to the glycosyl hydrolase 22 family. In terms of assembly, monomer. Ca(2+) is required as a cofactor.

It carries out the reaction Hydrolysis of (1-&gt;4)-beta-linkages between N-acetylmuramic acid and N-acetyl-D-glucosamine residues in a peptidoglycan and between N-acetyl-D-glucosamine residues in chitodextrins.. In terms of biological role, lysozymes have primarily a bacteriolytic function; those in tissues and body fluids are associated with the monocyte-macrophage system and enhance the activity of immunoagents. This chain is Lysozyme C, milk isozyme, found in Canis lupus familiaris (Dog).